We begin with the raw amino-acid sequence, 524 residues long: Thermosome subunit 3 (524 aa).

The protein belongs to the TCP-1 chaperonin family. In terms of assembly, the thermosome or CCT complex is a oligomeric complex of two octameric double-ring structures; the complex is probably a heterooligomer of CCT1, CCT2 and CCT3 with yet unknown stoichiometry.

Its function is as follows. Molecular chaperone that assists in the folding or refolding of nascent or denatured proteins along with ATP hydrolysis. ATPase activity is highest in thermosome assemblies containing CCT1:CCT2, followed by assemblies containing CCT1:CCT2:CCT3. Not required for thermosome ATPase activity. Not required for growth. The chain is Thermosome subunit 3 (cct3) from Haloferax volcanii (strain ATCC 29605 / DSM 3757 / JCM 8879 / NBRC 14742 / NCIMB 2012 / VKM B-1768 / DS2) (Halobacterium volcanii).